The primary structure comprises 462 residues: Argininosuccinate lyase (462 aa).

This sequence belongs to the lyase 1 family. Argininosuccinate lyase subfamily.

It is found in the cytoplasm. It catalyses the reaction 2-(N(omega)-L-arginino)succinate = fumarate + L-arginine. It participates in amino-acid biosynthesis; L-arginine biosynthesis; L-arginine from L-ornithine and carbamoyl phosphate: step 3/3. This is Argininosuccinate lyase from Bacillus cereus (strain AH820).